We begin with the raw amino-acid sequence, 165 residues long: Type IV major pilin protein PilE1 (165 aa).

Residues 1–7 constitute a propeptide, leader sequence; sequence MNTLQKG. Phenylalanine 8 is modified (N-methylphenylalanine). The chain crosses the membrane as a helical span at residues 8–28; that stretch reads FTLIELMIVIAIVGILAAVAL. The O-linked (DADDGlc) serine glycan is linked to serine 70. Serine 75 carries the post-translational modification O-(2-aminoethylphosphoryl)serine; alternate. An O-(2-cholinephosphoryl)serine; alternate modification is found at serine 75. The residue at position 75 (serine 75) is a Phosphoserine; alternate. An O-(sn-1-glycerophosphoryl)serine; partial modification is found at serine 101. Cysteine 128 and cysteine 158 form a disulfide bridge. Basic and acidic residues predominate over residues 137–153; that stretch reads DDTVADAKDGKEIDTKH. The interval 137 to 165 is disordered; sequence DDTVADAKDGKEIDTKHLPSTCRDNFDAK.

The protein belongs to the N-Me-Phe pilin family. In terms of assembly, the pili are polar flexible filaments of about 5.4 nanometers diameter and 2.5 micrometers average length; they consist of only a single polypeptide chain arranged in a helical configuration of five subunits per turn in the assembled pilus. Post-translationally, the O-linked glycan identified as Gal-GlcNAc disaccharide in PubMed:7477282 and PubMed:10048019 is now identified as either a hexosyl-diacetamidotrideoxyhexoside (DATDHex) by mass spectrometry in PubMed:15249686, or alpha-D-galactopyranosyl-(1-&gt;3)-2,4-diacetamido-2,4-dideoxy-beta-D-glucopyranoside (DADDGlc) by X-ray diffraction in PubMed:16949362. It is not clear whether there is a chemical difference in the glycosylation of the two derivatives of strain MS11 used in these experiments, or not. In terms of processing, in some MS11 derivative strains, Ser-75 is modified to O-(2-aminoethylphosphoryl)serine, and in some other derivatives that can be secondarily modified to O-(2-cholinephosphoryl)serine by N-methylation.

It is found in the fimbrium. The protein resides in the membrane. Major component of the type IV pilus (T4P) that plays a role in cellular adherence, microcolony formation, resistance to neutrophil mediated killing, twitching motility as well as transformation. Mediates the attachment and the formation of bacterial microcolonies on host epithelial cells. Mechanistically, pili retractation induces host NF-kappa-B activation in infected cells, which is temporally associated with the formation of gonococcal microcolonies. This Neisseria gonorrhoeae protein is Type IV major pilin protein PilE1 (pilE1).